Here is a 75-residue protein sequence, read N- to C-terminus: Exodeoxyribonuclease 7 small subunit (75 aa).

This sequence belongs to the XseB family. Heterooligomer composed of large and small subunits.

The protein localises to the cytoplasm. It catalyses the reaction Exonucleolytic cleavage in either 5'- to 3'- or 3'- to 5'-direction to yield nucleoside 5'-phosphates.. In terms of biological role, bidirectionally degrades single-stranded DNA into large acid-insoluble oligonucleotides, which are then degraded further into small acid-soluble oligonucleotides. The polypeptide is Exodeoxyribonuclease 7 small subunit (Citrifermentans bemidjiense (strain ATCC BAA-1014 / DSM 16622 / JCM 12645 / Bem) (Geobacter bemidjiensis)).